A 196-amino-acid chain; its full sequence is Thymidine kinase (196 aa).

An ATP-binding site is contributed by 17–24; it reads GPMFAGKT. The Proton acceptor role is filled by glutamate 92. Position 121 (phenylalanine 121) interacts with substrate. 2 residues coordinate Zn(2+): cysteine 146 and cysteine 149. 166–170 contacts substrate; sequence LILAG. Cysteine 179 and cysteine 182 together coordinate Zn(2+).

This sequence belongs to the thymidine kinase family.

It carries out the reaction thymidine + ATP = dTMP + ADP + H(+). Phosphorylates thymidine. ASFV replicates in the cytoplasm of infected cells and contains genes encoding a number of enzymes needed for DNA synthesis, including thymidine kinase. Important for growth in swine macrophages in vitro and is a virus virulence factor in swine. The sequence is that of Thymidine kinase from African swine fever virus (strain Badajoz 1971 Vero-adapted) (Ba71V).